We begin with the raw amino-acid sequence, 421 residues long: ATP-dependent RNA helicase RhlB (421 aa).

A Q motif motif is present at residues 9 to 37 (QKFSDFALHPKVIEALENKGFHNCTPIQA). One can recognise a Helicase ATP-binding domain in the interval 40-219 (LPLTLAGRDV…FEQMNNAEYV (180 aa)). 53 to 60 (AQTGTGKT) is a binding site for ATP. The DEAD box signature appears at 165 to 168 (DEAD). A Helicase C-terminal domain is found at 245–390 (RLLQTLIEEE…VSKYNPEALM (146 aa)). The disordered stretch occupies residues 393–421 (LPKPLRLTRSRPGNGPRRTGAPRNRRRSG). A compositionally biased stretch (low complexity) spans 403 to 414 (RPGNGPRRTGAP).

Belongs to the DEAD box helicase family. RhlB subfamily. In terms of assembly, component of the RNA degradosome, which is a multiprotein complex involved in RNA processing and mRNA degradation.

The protein resides in the cytoplasm. It catalyses the reaction ATP + H2O = ADP + phosphate + H(+). Its function is as follows. DEAD-box RNA helicase involved in RNA degradation. Has RNA-dependent ATPase activity and unwinds double-stranded RNA. The protein is ATP-dependent RNA helicase RhlB of Citrobacter koseri (strain ATCC BAA-895 / CDC 4225-83 / SGSC4696).